Reading from the N-terminus, the 331-residue chain is Bifunctional nuclease (331 aa).

The region spanning 126–261 (CVQNNPRVLR…RIAYNNGLKV (136 aa)) is the BFN domain. Positions 291–326 (EAQEFDLVRNMLVAAVEERYKDAAQYRDQLFMFRAK) constitute a UVR domain.

Belongs to the bifunctional nuclease family.

It is found in the nucleus. Functionally, bifunctional nuclease with both RNase and DNase activities. Involved in basal defense response. Participates in abscisic acid-derived callose deposition following infection by a necrotrophic pathogen. This Oryza minuta protein is Bifunctional nuclease (BBD).